The following is a 397-amino-acid chain: t-SNARE affecting a late Golgi compartment protein 2 (397 aa).

Residues Met-1–Lys-317 lie on the Cytoplasmic side of the membrane. Residues Asp-74–Val-96 are a coiled coil. Ser-109 carries the phosphoserine modification. The 63-residue stretch at Glu-244 to Ala-306 folds into the t-SNARE coiled-coil homology domain. The helical; Anchor for type IV membrane protein transmembrane segment at Val-318 to His-338 threads the bilayer. At Gly-339–Leu-397 the chain is on the vesicular side. The segment at Gly-341–Leu-397 is disordered. Residues Asn-353–Asp-374 are compositionally biased toward basic and acidic residues. Over residues Thr-386 to Leu-397 the composition is skewed to acidic residues.

Belongs to the syntaxin family. Interacts with VPS45.

Its subcellular location is the golgi apparatus. It localises to the trans-Golgi network membrane. The protein resides in the endosome membrane. Its function is as follows. t-SNARE that functions in transport from the endosome to the late Golgi and on the endocytic pathway. This Saccharomyces cerevisiae (strain ATCC 204508 / S288c) (Baker's yeast) protein is t-SNARE affecting a late Golgi compartment protein 2 (TLG2).